A 308-amino-acid polypeptide reads, in one-letter code: Glutaminase 2 (308 aa).

Positions 66, 117, 161, 168, 192, 244, and 262 each coordinate substrate.

Belongs to the glutaminase family. In terms of assembly, homotetramer.

It carries out the reaction L-glutamine + H2O = L-glutamate + NH4(+). This Escherichia coli O157:H7 protein is Glutaminase 2.